The following is a 281-amino-acid chain: Ribosomal RNA small subunit methyltransferase I (281 aa).

The protein belongs to the methyltransferase superfamily. RsmI family.

The protein resides in the cytoplasm. The catalysed reaction is cytidine(1402) in 16S rRNA + S-adenosyl-L-methionine = 2'-O-methylcytidine(1402) in 16S rRNA + S-adenosyl-L-homocysteine + H(+). In terms of biological role, catalyzes the 2'-O-methylation of the ribose of cytidine 1402 (C1402) in 16S rRNA. In Erythrobacter litoralis (strain HTCC2594), this protein is Ribosomal RNA small subunit methyltransferase I.